The primary structure comprises 189 residues: Ion-translocating oxidoreductase complex subunit B (189 aa).

The segment at 1–26 is hydrophobic; the sequence is MSAVMIAVVLLGLLALVFGAILGFAA. Positions 32–90 constitute a 4Fe-4S domain; sequence EGDPLVDQVESLLPQTQCGQCGYPGCRPYAEAIAGGDQINKCPPGGTATMEKIAELMGV. Residues Cys49, Cys52, Cys57, Cys73, Cys114, Cys117, Cys120, Cys124, Cys144, Cys147, Cys150, and Cys154 each contribute to the [4Fe-4S] cluster site. 4Fe-4S ferredoxin-type domains lie at 105–134 and 136–164; these read KVAY…GAGK and MHTV…MLPV.

This sequence belongs to the 4Fe4S bacterial-type ferredoxin family. RnfB subfamily. The complex is composed of six subunits: RnfA, RnfB, RnfC, RnfD, RnfE and RnfG. Requires [4Fe-4S] cluster as cofactor.

The protein resides in the cell inner membrane. Its function is as follows. Part of a membrane-bound complex that couples electron transfer with translocation of ions across the membrane. This is Ion-translocating oxidoreductase complex subunit B from Shewanella amazonensis (strain ATCC BAA-1098 / SB2B).